Consider the following 34-residue polypeptide: Photosystem II reaction center protein M (34 aa).

The helical transmembrane segment at Ile5–Ile25 threads the bilayer.

Belongs to the PsbM family. As to quaternary structure, PSII is composed of 1 copy each of membrane proteins PsbA, PsbB, PsbC, PsbD, PsbE, PsbF, PsbH, PsbI, PsbJ, PsbK, PsbL, PsbM, PsbT, PsbX, PsbY, PsbZ, Psb30/Ycf12, at least 3 peripheral proteins of the oxygen-evolving complex and a large number of cofactors. It forms dimeric complexes.

The protein resides in the plastid. The protein localises to the chloroplast thylakoid membrane. Functionally, one of the components of the core complex of photosystem II (PSII). PSII is a light-driven water:plastoquinone oxidoreductase that uses light energy to abstract electrons from H(2)O, generating O(2) and a proton gradient subsequently used for ATP formation. It consists of a core antenna complex that captures photons, and an electron transfer chain that converts photonic excitation into a charge separation. This subunit is found at the monomer-monomer interface. This chain is Photosystem II reaction center protein M, found in Cenchrus americanus (Pearl millet).